A 155-amino-acid polypeptide reads, in one-letter code: MGKKGVYAGVKADFRYGDESVTRLINTIMSDGKKSVAAKIVYEAMDIIDAKVEDADALEVFRKALGNVAPLVEVRSKRVGGATYQIPMEVKPSRREALAFRWIKQFATRRGGRGMAEKLAAELLDAANEQGASVKKRDEVHRMADANKAFAHFRF.

This sequence belongs to the universal ribosomal protein uS7 family. Part of the 30S ribosomal subunit. Contacts proteins S9 and S11.

Functionally, one of the primary rRNA binding proteins, it binds directly to 16S rRNA where it nucleates assembly of the head domain of the 30S subunit. Is located at the subunit interface close to the decoding center, probably blocks exit of the E-site tRNA. The sequence is that of Small ribosomal subunit protein uS7 from Prosthecochloris aestuarii (strain DSM 271 / SK 413).